A 140-amino-acid chain; its full sequence is Large-conductance mechanosensitive channel (140 aa).

2 helical membrane passes run 11-31 (FAMR…GAFG) and 82-102 (GNFI…FLLV).

The protein belongs to the MscL family. As to quaternary structure, homopentamer.

Its subcellular location is the cell inner membrane. Its function is as follows. Channel that opens in response to stretch forces in the membrane lipid bilayer. May participate in the regulation of osmotic pressure changes within the cell. In Parabacteroides distasonis (strain ATCC 8503 / DSM 20701 / CIP 104284 / JCM 5825 / NCTC 11152), this protein is Large-conductance mechanosensitive channel.